The chain runs to 88 residues: Insertion element ISR1 uncharacterized 10 kDa protein A3 (88 aa).

It belongs to the transposase 8 family.

The chain is Insertion element ISR1 uncharacterized 10 kDa protein A3 from Rhizobium sp.